The primary structure comprises 320 residues: MGDIRTFVFAIEDTETTQGLCKTIGRSSSFDQNSLCKPYNLYFDEPELSRQHAVLCIKTPIPKIEGVPSIEQLRICIRDLNNKTGTVNLVSDGPNDEIDLKNGDAFGLIAIDNHPFRDNHHLAAKLIFRIELEYFDEAREIVKCTITNVTFGKNNTVSSFPIHSATSTEDSDSSWYGLSEASTQTEVADECHETNTILTRGGRFSILSLRKRGSKQDQKICSNFDRKIHETSSFEEEIEVCTDTDTTEEKEEEEEKEEGDDEEGEIELEIIRVKRIKGRTKIKKTLTCFSKNKKIITPQHSNSMWLLLIVILIFDRLLSN.

The FHA domain maps to 22 to 86 (KTIGRSSSFD…IRDLNNKTGT (65 aa)). The disordered stretch occupies residues 242 to 264 (TDTDTTEEKEEEEEKEEGDDEEG).

This is an uncharacterized protein from Saccharomyces cerevisiae (strain ATCC 204508 / S288c) (Baker's yeast).